Here is a 315-residue protein sequence, read N- to C-terminus: Glycine--tRNA ligase alpha subunit (315 aa).

Belongs to the class-II aminoacyl-tRNA synthetase family. Tetramer of two alpha and two beta subunits.

It is found in the cytoplasm. It carries out the reaction tRNA(Gly) + glycine + ATP = glycyl-tRNA(Gly) + AMP + diphosphate. The sequence is that of Glycine--tRNA ligase alpha subunit from Pseudomonas putida (strain W619).